A 187-amino-acid polypeptide reads, in one-letter code: Ribosome-recycling factor (187 aa).

The protein belongs to the RRF family.

It localises to the cytoplasm. In terms of biological role, responsible for the release of ribosomes from messenger RNA at the termination of protein biosynthesis. May increase the efficiency of translation by recycling ribosomes from one round of translation to another. This Anaeromyxobacter sp. (strain Fw109-5) protein is Ribosome-recycling factor.